A 263-amino-acid chain; its full sequence is Proteasome subunit alpha type-1 (263 aa).

Met1 is modified (N-acetylmethionine). Residue Ser110 is modified to Phosphoserine; alternate. Ser110 is a glycosylation site (O-linked (GlcNAc) serine; alternate). Lys115 is covalently cross-linked (Glycyl lysine isopeptide (Lys-Gly) (interchain with G-Cter in ubiquitin)). Ser177 is subject to Phosphoserine. Residue Lys208 forms a Glycyl lysine isopeptide (Lys-Gly) (interchain with G-Cter in ubiquitin) linkage. Residues 232–263 (FLDGLEERPQRKAQPSQAAEEPAEKADEPMEH) form a disordered region. A compositionally biased stretch (basic and acidic residues) spans 253–263 (PAEKADEPMEH).

This sequence belongs to the peptidase T1A family. As to quaternary structure, the 26S proteasome consists of a 20S proteasome core and two 19S regulatory subunits. The 20S proteasome core is a barrel-shaped complex made of 28 subunits that are arranged in four stacked rings. The two outer rings are each formed by seven alpha subunits, and the two inner rings are formed by seven beta subunits. The proteolytic activity is exerted by three beta-subunits PSMB5, PSMB6 and PSMB7. Interacts with NOTCH3. Interacts with ZFAND1. Post-translationally, C-terminal extension is partially cleaved off by limited proteolysis leading to a conversion of the proteasome from its latent into its active form. Detected in liver (at protein level).

It localises to the cytoplasm. It is found in the nucleus. Component of the 20S core proteasome complex involved in the proteolytic degradation of most intracellular proteins. This complex plays numerous essential roles within the cell by associating with different regulatory particles. Associated with two 19S regulatory particles, forms the 26S proteasome and thus participates in the ATP-dependent degradation of ubiquitinated proteins. The 26S proteasome plays a key role in the maintenance of protein homeostasis by removing misfolded or damaged proteins that could impair cellular functions, and by removing proteins whose functions are no longer required. Associated with the PA200 or PA28, the 20S proteasome mediates ubiquitin-independent protein degradation. This type of proteolysis is required in several pathways including spermatogenesis (20S-PA200 complex) or generation of a subset of MHC class I-presented antigenic peptides (20S-PA28 complex). This is Proteasome subunit alpha type-1 (Psma1) from Mus musculus (Mouse).